Reading from the N-terminus, the 330-residue chain is Ferredoxin--NADP reductase (330 aa).

The FAD site is built by E35, Q43, Y48, V90, F123, D285, and T326.

This sequence belongs to the ferredoxin--NADP reductase type 2 family. Homodimer. FAD is required as a cofactor.

The enzyme catalyses 2 reduced [2Fe-2S]-[ferredoxin] + NADP(+) + H(+) = 2 oxidized [2Fe-2S]-[ferredoxin] + NADPH. The protein is Ferredoxin--NADP reductase of Streptococcus pyogenes serotype M1.